Reading from the N-terminus, the 257-residue chain is Putative hydro-lyase BceJ2315_40370 (257 aa).

The protein belongs to the D-glutamate cyclase family.

This Burkholderia cenocepacia (strain ATCC BAA-245 / DSM 16553 / LMG 16656 / NCTC 13227 / J2315 / CF5610) (Burkholderia cepacia (strain J2315)) protein is Putative hydro-lyase BceJ2315_40370.